A 646-amino-acid chain; its full sequence is Lipoteichoic acid synthase (646 aa).

Topologically, residues 1–7 (MSSQKKK) are cytoplasmic. A helical membrane pass occupies residues 8-28 (ISLFAFFLLTVITITLKTYFS). The Extracellular portion of the chain corresponds to 29–43 (YYVDFSLGVKGLVQN). Residues 44 to 64 (LILLMNPYSLVALVLSVFLFF) traverse the membrane as a helical segment. Residues 65 to 68 (KGKK) lie on the Cytoplasmic side of the membrane. A helical transmembrane segment spans residues 69–89 (AFWFMFIGGFLLTFLLYANVV). Over 90–119 (YFRFFSDFLTFSTLNQVGNVESMGGAVSAS) the chain is Extracellular. Residues 120–140 (FKWYDFVYFIDTLVYLFILIF) form a helical membrane-spanning segment. The Cytoplasmic segment spans residues 141 to 153 (KTKWLDTKAFSKK). The chain crosses the membrane as a helical span at residues 154–174 (FVPVVMAASVALFFLNLAFAE). At 175–646 (TDRPELLTRT…ETGPKANSKK (472 aa)) the chain is on the extracellular side. 2 residues coordinate Mn(2+): glutamate 255 and threonine 300. Residue threonine 300 is part of the active site. Histidine 416 is a substrate binding site. Aspartate 475 and histidine 476 together coordinate Mn(2+). Over residues 623–638 (NPDFKKVNPSKYKYET) the composition is skewed to basic and acidic residues. The segment at 623 to 646 (NPDFKKVNPSKYKYETGPKANSKK) is disordered.

This sequence belongs to the LTA synthase family. In terms of processing, proteolytically cleaved.

The protein resides in the cell membrane. It localises to the secreted. Its pathway is cell wall biogenesis; lipoteichoic acid biosynthesis. Its function is as follows. Catalyzes the polymerization of lipoteichoic acid (LTA) polyglycerol phosphate, a reaction that presumably uses phosphatidylglycerol (PG) as substrate. Is required for staphylococcal growth and cell division process. The chain is Lipoteichoic acid synthase (ltaS) from Staphylococcus aureus (strain USA300).